We begin with the raw amino-acid sequence, 90 residues long: DNA-directed RNA polymerase subunit omega (90 aa).

Positions Arg-69 to Arg-90 are disordered.

This sequence belongs to the RNA polymerase subunit omega family. In terms of assembly, the RNAP catalytic core consists of 2 alpha, 1 beta, 1 beta' and 1 omega subunit. When a sigma factor is associated with the core the holoenzyme is formed, which can initiate transcription.

The enzyme catalyses RNA(n) + a ribonucleoside 5'-triphosphate = RNA(n+1) + diphosphate. Promotes RNA polymerase assembly. Latches the N- and C-terminal regions of the beta' subunit thereby facilitating its interaction with the beta and alpha subunits. The protein is DNA-directed RNA polymerase subunit omega of Vibrio vulnificus (strain CMCP6).